We begin with the raw amino-acid sequence, 451 residues long: Probable plasmid replicative DNA helicase (451 aa).

One can recognise an SF4 helicase domain in the interval 194 to 451 (QNSFFDAFPT…SKFSAIKKVW (258 aa)). 225-232 (ARPSIGKT) provides a ligand contact to ATP.

Belongs to the helicase family. DnaB subfamily. In terms of assembly, homohexamer.

The enzyme catalyses Couples ATP hydrolysis with the unwinding of duplex DNA at the replication fork by translocating in the 5'-3' direction. This creates two antiparallel DNA single strands (ssDNA). The leading ssDNA polymer is the template for DNA polymerase III holoenzyme which synthesizes a continuous strand.. The catalysed reaction is ATP + H2O = ADP + phosphate + H(+). In terms of biological role, a replicative DNA helicase, it participates in initiation and elongation during DNA replication. Travels ahead of the DNA replisome, separating dsDNA into templates for DNA synthesis. A processive ATP-dependent 5'-3' DNA helicase it has DNA-dependent ATPase activity. Functionally, the plasmid this protein is encoded on is thought to be required for growth within mammalian cells. The chain is Probable plasmid replicative DNA helicase from Chlamydia trachomatis serovar L2 (strain ATCC VR-902B / DSM 19102 / 434/Bu).